A 350-amino-acid polypeptide reads, in one-letter code: GTPase Obg (350 aa).

One can recognise an Obg domain in the interval 1 to 159; the sequence is MKLVDEAEIL…RLLKLELKLL (159 aa). In terms of domain architecture, OBG-type G spans 160–337; that stretch reads ADVGLLGFPN…IMKDVMAFFD (178 aa). GTP contacts are provided by residues 166–173, 191–195, 213–216, 287–290, and 318–320; these read GFPNAGKS, FTTLY, DVPG, NKAD, and SAL. Mg(2+) contacts are provided by Ser173 and Thr193.

It belongs to the TRAFAC class OBG-HflX-like GTPase superfamily. OBG GTPase family. In terms of assembly, monomer. Mg(2+) is required as a cofactor.

The protein localises to the cytoplasm. In terms of biological role, an essential GTPase which binds GTP, GDP and possibly (p)ppGpp with moderate affinity, with high nucleotide exchange rates and a fairly low GTP hydrolysis rate. Plays a role in control of the cell cycle, stress response, ribosome biogenesis and in those bacteria that undergo differentiation, in morphogenesis control. This is GTPase Obg from Xanthomonas campestris pv. campestris (strain 8004).